The chain runs to 288 residues: MNEQWLEHLPLKDIKEISPVSGGDVNEAYRVETDTDTFFLLVQRGRKESFYAAEIAGLNEFERAGITAPRVIASGEVNGDAYLVMTYLEEGASGSQRQLGQLVAQLHSQQQEEGKFGFSLPYEGGDISFDNHWQDDWCTIFVDKRLDHLKDELLNRGLWDANDIKVYDKVRRQIVAELEKHQSKPSLLHGDLWGGNYMFLQDGRPALFDPAPLYGDREFDIGITTVFGGFTSEFYDAYNKHYPLAKGASYRLEFYRLYLLMVHLLKFGEMYRDSVAHSMDKILQDTTS.

86–88 (TYL) contacts ATP. The Proton acceptor role is filled by Asp-191.

Belongs to the fructosamine kinase family.

The enzyme catalyses N(6)-(D-ribulosyl)-L-lysine + ATP = N(6)-(3-O-phospho-D-ribulosyl)-L-lysine + ADP + H(+). It catalyses the reaction N(6)-(D-erythrulosyl)-L-lysine + ATP = N(6)-(3-O-phospho-D-erythrulosyl)-L-lysine + ADP + H(+). It carries out the reaction N(6)-D-ribulosyl-L-lysyl-[protein] + ATP = N(6)-(3-O-phospho-D-ribulosyl)-L-lysyl-[protein] + ADP + H(+). The catalysed reaction is N(6)-(D-erythrulosyl)-L-lysyl-[protein] + ATP = N(6)-(3-O-phospho-D-erythrulosyl)-L-lysyl-[protein] + ADP + H(+). In terms of biological role, ketoamine kinase that phosphorylates ketoamines, such as erythruloselysine and ribuloselysine, on the third carbon of the sugar moiety to generate ketoamine 3-phosphate. Has higher activity on free lysine (erythruloselysine and ribuloselysine), than on ribuloselysine and erythruloselysine residues on glycated proteins. In Staphylococcus aureus (strain NCTC 8325 / PS 47), this protein is Probable ketoamine kinase SAOUHSC_02908.